The following is a 602-amino-acid chain: Sodium- and chloride-dependent GABA transporter 2 (602 aa).

Residues 1 to 40 lie on the Cytoplasmic side of the membrane; it reads MDSRVSGTTSNGETKPVCPGLEKAAEDGALQREQWSNKME. 3 consecutive transmembrane segments (helical) span residues 41–61, 68–88, and 121–141; these read FLLS…FPYL, GAFF…VFLL, and IVTL…FYLF. The Extracellular portion of the chain corresponds to 142–206; that stretch reads SSFTIDLPWG…GIQHLGALRW (65 aa). An intrachain disulfide couples Cys-153 to Cys-162. Asn-169 and Asn-173 each carry an N-linked (GlcNAc...) asparagine glycan. 2 helical membrane passes run 207–227 and 233–253; these read ELAL…WKGV and VVYF…IRGV. A glycan (N-linked (GlcNAc...) asparagine) is linked at Asn-269. 7 consecutive transmembrane segments (helical) span residues 282-302, 319-339, 366-386, 418-438, 453-473, 490-510, and 528-548; these read AGTQ…ALGS, FLNS…LGFM, VVML…VVLL, VLIL…LTEG, GMCL…AYGA, PLIK…TFLF, and WWGD…IPAW. Residues 549-602 lie on the Cytoplasmic side of the membrane; it reads SCYKLSTLKGSFRERVRQLLCPAKDLPQGHREGPSAPATPRTSLLILTELEPHH. At Thr-587 the chain carries Phosphothreonine. Ser-591 carries the post-translational modification Phosphoserine.

Belongs to the sodium:neurotransmitter symporter (SNF) (TC 2.A.22) family. SLC6A13 subfamily.

It localises to the cell membrane. Its subcellular location is the basolateral cell membrane. It carries out the reaction 4-aminobutanoate(out) + chloride(out) + 2 Na(+)(out) = 4-aminobutanoate(in) + chloride(in) + 2 Na(+)(in). It catalyses the reaction taurine(out) + chloride(out) + 2 Na(+)(out) = taurine(in) + chloride(in) + 2 Na(+)(in). The catalysed reaction is beta-alanine(out) + chloride(out) + 2 Na(+)(out) = beta-alanine(in) + chloride(in) + 2 Na(+)(in). The enzyme catalyses hypotaurine(out) + chloride(out) + 2 Na(+)(out) = hypotaurine(in) + chloride(in) + 2 Na(+)(in). Mediates sodium- and chloride-dependent transport of gamma-aminobutyric acid (GABA). Can also mediate transport of beta-alanine, taurine and hypotaurine. The chain is Sodium- and chloride-dependent GABA transporter 2 (SLC6A13) from Bos taurus (Bovine).